Reading from the N-terminus, the 363-residue chain is NAD(P)H-quinone oxidoreductase subunit 1, chloroplastic (363 aa).

The next 8 membrane-spanning stretches (helical) occupy residues 26 to 46 (FVWICVPIVVLILGITLGVLV), 96 to 116 (WLFALGPAIVVIPVLLSFLVI), 127 to 147 (ISIGMFFWIAVSSVAPVGLLV), 175 to 195 (LALCVLSVVLMSNSLSTIEIV), 203 to 223 (ILGWNIWRQPVGFIAFVISAL), 253 to 273 (FGLFYVASYLNLFASSLFVTI), 303 to 323 (GLIAFAITLSKAYLFLFASIL), and 343 to 363 (FLLPVALGNLLLTASFELALL).

This sequence belongs to the complex I subunit 1 family. In terms of assembly, NDH is composed of at least 16 different subunits, 5 of which are encoded in the nucleus.

The protein localises to the plastid. The protein resides in the chloroplast thylakoid membrane. It carries out the reaction a plastoquinone + NADH + (n+1) H(+)(in) = a plastoquinol + NAD(+) + n H(+)(out). The catalysed reaction is a plastoquinone + NADPH + (n+1) H(+)(in) = a plastoquinol + NADP(+) + n H(+)(out). Functionally, NDH shuttles electrons from NAD(P)H:plastoquinone, via FMN and iron-sulfur (Fe-S) centers, to quinones in the photosynthetic chain and possibly in a chloroplast respiratory chain. The immediate electron acceptor for the enzyme in this species is believed to be plastoquinone. Couples the redox reaction to proton translocation, and thus conserves the redox energy in a proton gradient. The sequence is that of NAD(P)H-quinone oxidoreductase subunit 1, chloroplastic from Zygnema circumcarinatum (Green alga).